The following is a 116-amino-acid chain: Iron-sulfur cluster insertion protein ErpA (116 aa).

Iron-sulfur cluster is bound by residues Cys44, Cys108, and Cys110.

Belongs to the HesB/IscA family. Homodimer. The cofactor is iron-sulfur cluster.

Required for insertion of 4Fe-4S clusters for at least IspG. This chain is Iron-sulfur cluster insertion protein ErpA, found in Aeromonas hydrophila subsp. hydrophila (strain ATCC 7966 / DSM 30187 / BCRC 13018 / CCUG 14551 / JCM 1027 / KCTC 2358 / NCIMB 9240 / NCTC 8049).